The primary structure comprises 376 residues: 1-deoxy-D-xylulose 5-phosphate reductoisomerase (376 aa).

Residues S10, G11, S12, V13, G36, K37, N38, and N118 each contribute to the NADPH site. A 1-deoxy-D-xylulose 5-phosphate-binding site is contributed by K119. E120 lines the NADPH pocket. D144 is a binding site for Mn(2+). 1-deoxy-D-xylulose 5-phosphate is bound by residues S145, E146, S170, and H193. E146 is a binding site for Mn(2+). G199 is an NADPH binding site. 1-deoxy-D-xylulose 5-phosphate is bound by residues S206, N211, K212, and E215. E215 lines the Mn(2+) pocket.

This sequence belongs to the DXR family. Mg(2+) is required as a cofactor. The cofactor is Mn(2+).

The enzyme catalyses 2-C-methyl-D-erythritol 4-phosphate + NADP(+) = 1-deoxy-D-xylulose 5-phosphate + NADPH + H(+). It functions in the pathway isoprenoid biosynthesis; isopentenyl diphosphate biosynthesis via DXP pathway; isopentenyl diphosphate from 1-deoxy-D-xylulose 5-phosphate: step 1/6. In terms of biological role, catalyzes the NADPH-dependent rearrangement and reduction of 1-deoxy-D-xylulose-5-phosphate (DXP) to 2-C-methyl-D-erythritol 4-phosphate (MEP). In Macrococcus caseolyticus (strain JCSC5402) (Macrococcoides caseolyticum), this protein is 1-deoxy-D-xylulose 5-phosphate reductoisomerase.